The following is a 259-amino-acid chain: 2,3-dihydroxy-2,3-dihydro-p-cumate dehydrogenase (259 aa).

NAD(+) is bound at residue 18 to 42 (VTGGAHGIGLGIVERLLGLGARVTA). Tyr163 functions as the Proton acceptor in the catalytic mechanism.

It belongs to the short-chain dehydrogenases/reductases (SDR) family.

The enzyme catalyses (2R,3S)-2,3-dihydroxy-2,3-dihydro-p-cumate + NAD(+) = 2,3-dihydroxy-p-cumate + NADH + H(+). Its pathway is aromatic compound metabolism; p-cumate degradation; acetaldehyde and pyruvate from p-cumate: step 2/7. The polypeptide is 2,3-dihydroxy-2,3-dihydro-p-cumate dehydrogenase (cmtB) (Pseudomonas putida (strain ATCC 700007 / DSM 6899 / JCM 31910 / BCRC 17059 / LMG 24140 / F1)).